Consider the following 396-residue polypeptide: Argininosuccinate synthase (396 aa).

An ATP-binding site is contributed by 9–17 (AYSGGLDTS). An L-citrulline-binding site is contributed by Y85. G115 lines the ATP pocket. T117, N121, and D122 together coordinate L-aspartate. N121 is an L-citrulline binding site. 4 residues coordinate L-citrulline: R125, S173, E258, and Y270.

The protein belongs to the argininosuccinate synthase family. Type 1 subfamily. In terms of assembly, homotetramer.

Its subcellular location is the cytoplasm. The enzyme catalyses L-citrulline + L-aspartate + ATP = 2-(N(omega)-L-arginino)succinate + AMP + diphosphate + H(+). Its pathway is amino-acid biosynthesis; L-arginine biosynthesis; L-arginine from L-ornithine and carbamoyl phosphate: step 2/3. The sequence is that of Argininosuccinate synthase from Streptococcus agalactiae serotype Ia (strain ATCC 27591 / A909 / CDC SS700).